An 82-amino-acid chain; its full sequence is Large ribosomal subunit protein bL31B (82 aa).

Belongs to the bacterial ribosomal protein bL31 family. Type B subfamily. In terms of assembly, part of the 50S ribosomal subunit after the end of exponential growth.

Its function is as follows. While neither of the L31 paralogs is essential, this protein does not seem to function as the main L31 protein. Has a higher affinity for 70S ribosomes than the zinc-containing L31 paralog; is able to displace it to varying extents, even under zinc-replete conditions. The sequence is that of Large ribosomal subunit protein bL31B (rpmE2) from Bacillus subtilis (strain 168).